The sequence spans 138 residues: Spermidine export protein MdtJ (138 aa).

The next 4 membrane-spanning stretches (helical) occupy residues 1–21, 30–50, 54–74, and 81–101; these read MIYWLFLAMAIITEVIGTLSM, VVGMAVMYIMIATSYILLAMA, VALGVAYALWEGVGILFITVF, and ESLSLMKVGGLALLITGIMLI.

Belongs to the drug/metabolite transporter (DMT) superfamily. Small multidrug resistance (SMR) (TC 2.A.7.1) family. MdtJ subfamily. In terms of assembly, forms a complex with MdtI.

The protein resides in the cell inner membrane. Catalyzes the excretion of spermidine. This is Spermidine export protein MdtJ from Photorhabdus laumondii subsp. laumondii (strain DSM 15139 / CIP 105565 / TT01) (Photorhabdus luminescens subsp. laumondii).